We begin with the raw amino-acid sequence, 285 residues long: Eukaryotic translation initiation factor 3 subunit F-2 (285 aa).

The MPN domain occupies 11–145; the sequence is VLIKPLVLFQ…TRLYCAVEIG (135 aa).

The protein belongs to the eIF-3 subunit F family. Component of the eukaryotic translation initiation factor 3 (eIF-3) complex. The eIF-3 complex interacts with pix.

The protein localises to the cytoplasm. Functionally, component of the eukaryotic translation initiation factor 3 (eIF-3) complex, which is involved in protein synthesis of a specialized repertoire of mRNAs and, together with other initiation factors, stimulates binding of mRNA and methionyl-tRNAi to the 40S ribosome. The eIF-3 complex specifically targets and initiates translation of a subset of mRNAs involved in cell proliferation. The sequence is that of Eukaryotic translation initiation factor 3 subunit F-2 from Drosophila erecta (Fruit fly).